The sequence spans 732 residues: Catalase-peroxidase (732 aa).

Residues 1 to 24 (MDAKTDDNSAGKCPVAHGSAGRTN) are disordered. A cross-link (tryptophyl-tyrosyl-methioninium (Trp-Tyr) (with M-245)) is located at residues 96-219 (WHSAGTYRIA…LGAVQMGLIY (124 aa)). Histidine 97 (proton acceptor) is an active-site residue. The tryptophyl-tyrosyl-methioninium (Tyr-Met) (with W-96) cross-link spans 219-245 (YVNPEGPNGNPDPLAAARDIRDTFARM). Residue histidine 260 participates in heme b binding.

It belongs to the peroxidase family. Peroxidase/catalase subfamily. As to quaternary structure, homodimer or homotetramer. Requires heme b as cofactor. In terms of processing, formation of the three residue Trp-Tyr-Met cross-link is important for the catalase, but not the peroxidase activity of the enzyme.

The catalysed reaction is H2O2 + AH2 = A + 2 H2O. It catalyses the reaction 2 H2O2 = O2 + 2 H2O. Bifunctional enzyme with both catalase and broad-spectrum peroxidase activity. This chain is Catalase-peroxidase, found in Mesorhizobium japonicum (strain LMG 29417 / CECT 9101 / MAFF 303099) (Mesorhizobium loti (strain MAFF 303099)).